We begin with the raw amino-acid sequence, 110 residues long: Cytochrome c6 (110 aa).

Positions 1–25 (MKKKLSVLFTVFSFFVIGFAQIAFA) are cleaved as a signal peptide. Heme c is bound by residues C39, C42, H43, and M83.

This sequence belongs to the cytochrome c family. PetJ subfamily. Monomer. Binds 1 heme c group covalently per subunit.

It localises to the plastid. The protein localises to the chloroplast thylakoid lumen. Its function is as follows. Functions as an electron carrier between membrane-bound cytochrome b6-f and photosystem I in oxygenic photosynthesis. The sequence is that of Cytochrome c6 (petJ) from Pyropia yezoensis (Susabi-nori).